The following is a 322-amino-acid chain: tRNA dimethylallyltransferase (322 aa).

12-19 (GPTAAGKT) provides a ligand contact to ATP. 14-19 (TAAGKT) lines the substrate pocket. Interaction with substrate tRNA regions lie at residues 37–40 (DSAL) and 160–164 (QRLIR).

This sequence belongs to the IPP transferase family. As to quaternary structure, monomer. Mg(2+) serves as cofactor.

The catalysed reaction is adenosine(37) in tRNA + dimethylallyl diphosphate = N(6)-dimethylallyladenosine(37) in tRNA + diphosphate. Its function is as follows. Catalyzes the transfer of a dimethylallyl group onto the adenine at position 37 in tRNAs that read codons beginning with uridine, leading to the formation of N6-(dimethylallyl)adenosine (i(6)A). In Pseudomonas putida (Arthrobacter siderocapsulatus), this protein is tRNA dimethylallyltransferase.